The chain runs to 515 residues: Putative acetolactate synthase large subunit IlvX (515 aa).

Glu-48 serves as a coordination point for thiamine diphosphate. FAD is bound by residues 249-269 (FAEGAAAQLDGVKHLVLAGAR) and 283-302 (DLVPAGCEVHVLAEPGGAAD). The thiamine pyrophosphate binding stretch occupies residues 357-436 (TCGVLLPQAT…VTTVIYNNGA (80 aa)). Residues Asp-407 and Asn-434 each coordinate Mg(2+).

Belongs to the TPP enzyme family. As to quaternary structure, heterodimer of large catalytic subunit and small regulatory subunit. It depends on Mg(2+) as a cofactor. The cofactor is thiamine diphosphate.

It catalyses the reaction 2 pyruvate + H(+) = (2S)-2-acetolactate + CO2. Its pathway is amino-acid biosynthesis; L-isoleucine biosynthesis; L-isoleucine from 2-oxobutanoate: step 1/4. The protein operates within amino-acid biosynthesis; L-valine biosynthesis; L-valine from pyruvate: step 1/4. Catalyzes the conversion of 2 pyruvate molecules into acetolactate in the first common step of the biosynthetic pathway of the branched-amino acids such as leucine, isoleucine, and valine. This Mycobacterium tuberculosis (strain ATCC 25618 / H37Rv) protein is Putative acetolactate synthase large subunit IlvX (ilvX).